The sequence spans 252 residues: 2-succinyl-6-hydroxy-2,4-cyclohexadiene-1-carboxylate synthase (252 aa).

It belongs to the AB hydrolase superfamily. MenH family. In terms of assembly, monomer.

It carries out the reaction 5-enolpyruvoyl-6-hydroxy-2-succinyl-cyclohex-3-ene-1-carboxylate = (1R,6R)-6-hydroxy-2-succinyl-cyclohexa-2,4-diene-1-carboxylate + pyruvate. The protein operates within quinol/quinone metabolism; 1,4-dihydroxy-2-naphthoate biosynthesis; 1,4-dihydroxy-2-naphthoate from chorismate: step 3/7. Its pathway is quinol/quinone metabolism; menaquinone biosynthesis. Functionally, catalyzes a proton abstraction reaction that results in 2,5-elimination of pyruvate from 2-succinyl-5-enolpyruvyl-6-hydroxy-3-cyclohexene-1-carboxylate (SEPHCHC) and the formation of 2-succinyl-6-hydroxy-2,4-cyclohexadiene-1-carboxylate (SHCHC). The protein is 2-succinyl-6-hydroxy-2,4-cyclohexadiene-1-carboxylate synthase of Shigella boydii serotype 4 (strain Sb227).